Reading from the N-terminus, the 375-residue chain is Queuine tRNA-ribosyltransferase (375 aa).

Aspartate 89 acts as the Proton acceptor in catalysis. Substrate-binding positions include 89 to 93, aspartate 143, glutamine 187, and glycine 214; that span reads DSGGF. The RNA binding stretch occupies residues 245-251; the sequence is GVGKPED. Aspartate 264 (nucleophile) is an active-site residue. An RNA binding; important for wobble base 34 recognition region spans residues 269–273; it reads TRNAR. Zn(2+) is bound by residues cysteine 302, cysteine 304, cysteine 307, and histidine 333.

Belongs to the queuine tRNA-ribosyltransferase family. As to quaternary structure, homodimer. Within each dimer, one monomer is responsible for RNA recognition and catalysis, while the other monomer binds to the replacement base PreQ1. It depends on Zn(2+) as a cofactor.

It catalyses the reaction 7-aminomethyl-7-carbaguanine + guanosine(34) in tRNA = 7-aminomethyl-7-carbaguanosine(34) in tRNA + guanine. Its pathway is tRNA modification; tRNA-queuosine biosynthesis. Its function is as follows. Catalyzes the base-exchange of a guanine (G) residue with the queuine precursor 7-aminomethyl-7-deazaguanine (PreQ1) at position 34 (anticodon wobble position) in tRNAs with GU(N) anticodons (tRNA-Asp, -Asn, -His and -Tyr). Catalysis occurs through a double-displacement mechanism. The nucleophile active site attacks the C1' of nucleotide 34 to detach the guanine base from the RNA, forming a covalent enzyme-RNA intermediate. The proton acceptor active site deprotonates the incoming PreQ1, allowing a nucleophilic attack on the C1' of the ribose to form the product. After dissociation, two additional enzymatic reactions on the tRNA convert PreQ1 to queuine (Q), resulting in the hypermodified nucleoside queuosine (7-(((4,5-cis-dihydroxy-2-cyclopenten-1-yl)amino)methyl)-7-deazaguanosine). The protein is Queuine tRNA-ribosyltransferase of Salmonella arizonae (strain ATCC BAA-731 / CDC346-86 / RSK2980).